The following is a 261-amino-acid chain: 1-(5-phosphoribosyl)-5-[(5-phosphoribosylamino)methylideneamino] imidazole-4-carboxamide isomerase (261 aa).

D8 acts as the Proton acceptor in catalysis. Residue D130 is the Proton donor of the active site.

The protein belongs to the HisA/HisF family.

The protein localises to the cytoplasm. The catalysed reaction is 1-(5-phospho-beta-D-ribosyl)-5-[(5-phospho-beta-D-ribosylamino)methylideneamino]imidazole-4-carboxamide = 5-[(5-phospho-1-deoxy-D-ribulos-1-ylimino)methylamino]-1-(5-phospho-beta-D-ribosyl)imidazole-4-carboxamide. Its pathway is amino-acid biosynthesis; L-histidine biosynthesis; L-histidine from 5-phospho-alpha-D-ribose 1-diphosphate: step 4/9. In Prosthecochloris aestuarii (strain DSM 271 / SK 413), this protein is 1-(5-phosphoribosyl)-5-[(5-phosphoribosylamino)methylideneamino] imidazole-4-carboxamide isomerase.